A 230-amino-acid chain; its full sequence is Thioredoxin domain-containing protein PLP3B (230 aa).

Residues 89 to 173 form the Thioredoxin domain; it reads VSEGDFLGEV…GIAMDRLVGF (85 aa). The segment at 199 to 230 is disordered; it reads EKRKEEDEEDYEYQESIRRSVRSSANVDSDSD. Polar residues predominate over residues 220–230; the sequence is RSSANVDSDSD.

It belongs to the phosducin family. Interacts with TUBB2, TUBB3, TUBB4 and TUBB5. Expressed in roots, cotyledons, leaves, stems and flowers.

The protein resides in the cytoplasm. It localises to the nucleus. Its function is as follows. Tubulin-binding protein involved in microtubule formation. The protein is Thioredoxin domain-containing protein PLP3B (PLP3B) of Arabidopsis thaliana (Mouse-ear cress).